A 452-amino-acid polypeptide reads, in one-letter code: Pup--protein ligase 1 (452 aa).

A Mg(2+)-binding site is contributed by Glu-9. Arg-53 contributes to the ATP binding site. Tyr-55 provides a ligand contact to Mg(2+). Residue Asp-57 is the Proton acceptor of the active site. A Mg(2+)-binding site is contributed by Glu-63. The ATP site is built by Thr-66 and Trp-419.

It belongs to the Pup ligase/Pup deamidase family. Pup-conjugating enzyme subfamily.

The enzyme catalyses ATP + [prokaryotic ubiquitin-like protein]-L-glutamate + [protein]-L-lysine = ADP + phosphate + N(6)-([prokaryotic ubiquitin-like protein]-gamma-L-glutamyl)-[protein]-L-lysine.. It participates in protein degradation; proteasomal Pup-dependent pathway. The protein operates within protein modification; protein pupylation. In terms of biological role, catalyzes the covalent attachment of the prokaryotic ubiquitin-like protein modifier Pup to the proteasomal substrate proteins, thereby targeting them for proteasomal degradation. This tagging system is termed pupylation. The ligation reaction involves the side-chain carboxylate of the C-terminal glutamate of Pup and the side-chain amino group of a substrate lysine. This is Pup--protein ligase 1 from Rhodococcus erythropolis (Arthrobacter picolinophilus).